Here is a 374-residue protein sequence, read N- to C-terminus: Deoxyguanosinetriphosphate triphosphohydrolase-like protein (374 aa).

The 132-residue stretch at 65 to 196 (RLTHSLEVAQ…ANLADEIAYN (132 aa)) folds into the HD domain.

It belongs to the dGTPase family. Type 2 subfamily.

In Nitrosomonas europaea (strain ATCC 19718 / CIP 103999 / KCTC 2705 / NBRC 14298), this protein is Deoxyguanosinetriphosphate triphosphohydrolase-like protein (dgt).